Here is a 220-residue protein sequence, read N- to C-terminus: NADH-quinone oxidoreductase subunit I (220 aa).

2 4Fe-4S ferredoxin-type domains span residues 71–102 (LQRL…IITH) and 112–141 (DSYT…MGNR). Residues Cys82, Cys85, Cys88, Cys92, Cys121, Cys124, Cys127, and Cys131 each contribute to the [4Fe-4S] cluster site. Residues 187–220 (MQATPLDYVQEPSKEESKEETPTRSESHKGDENV) are disordered. Positions 198 to 220 (PSKEESKEETPTRSESHKGDENV) are enriched in basic and acidic residues.

The protein belongs to the complex I 23 kDa subunit family. In terms of assembly, NDH-1 is composed of 14 different subunits. Subunits NuoA, H, J, K, L, M, N constitute the membrane sector of the complex. Requires [4Fe-4S] cluster as cofactor.

Its subcellular location is the cell inner membrane. It carries out the reaction a quinone + NADH + 5 H(+)(in) = a quinol + NAD(+) + 4 H(+)(out). NDH-1 shuttles electrons from NADH, via FMN and iron-sulfur (Fe-S) centers, to quinones in the respiratory chain. The immediate electron acceptor for the enzyme in this species is believed to be ubiquinone. Couples the redox reaction to proton translocation (for every two electrons transferred, four hydrogen ions are translocated across the cytoplasmic membrane), and thus conserves the redox energy in a proton gradient. This is NADH-quinone oxidoreductase subunit I from Helicobacter pylori (strain G27).